The chain runs to 129 residues: Large ribosomal subunit protein bL12c (129 aa).

The protein belongs to the bacterial ribosomal protein bL12 family. Homodimer. Part of the ribosomal stalk of the 50S ribosomal subunit. Forms a multimeric L10(L12)X complex, where L10 forms an elongated spine to which 2 to 4 L12 dimers bind in a sequential fashion. Binds GTP-bound translation factors.

It is found in the plastid. The protein localises to the chloroplast. Its function is as follows. Forms part of the ribosomal stalk which helps the ribosome interact with GTP-bound translation factors. Is thus essential for accurate translation. This Tupiella akineta (Green alga) protein is Large ribosomal subunit protein bL12c.